Here is a 209-residue protein sequence, read N- to C-terminus: Small ribosomal subunit protein uS4 (209 aa).

The disordered stretch occupies residues serine 23 to aspartate 46. In terms of domain architecture, S4 RNA-binding spans cysteine 93–leucine 156.

It belongs to the universal ribosomal protein uS4 family. In terms of assembly, part of the 30S ribosomal subunit. Contacts protein S5. The interaction surface between S4 and S5 is involved in control of translational fidelity.

Its function is as follows. One of the primary rRNA binding proteins, it binds directly to 16S rRNA where it nucleates assembly of the body of the 30S subunit. Functionally, with S5 and S12 plays an important role in translational accuracy. This is Small ribosomal subunit protein uS4 from Chlamydia caviae (strain ATCC VR-813 / DSM 19441 / 03DC25 / GPIC) (Chlamydophila caviae).